The sequence spans 413 residues: Lysosomal phospholipase A and acyltransferase (413 aa).

The first 33 residues, 1–33, serve as a signal peptide directing secretion; it reads MDRHLCICREIQLRSGLLFPFLLLMMLADLALP. Substrate is bound at residue aspartate 46. The cysteines at positions 65 and 89 are disulfide-linked. Asparagine 99 carries N-linked (GlcNAc...) asparagine glycosylation. Catalysis depends on serine 198, which acts as the Acyl-ester intermediate. Serine 198 contributes to the Zn(2+) binding site. Methionine 199 is a substrate binding site. N-linked (GlcNAc...) asparagine glycans are attached at residues asparagine 273 and asparagine 289. Zn(2+) is bound at residue cysteine 355. Catalysis depends on charge relay system residues aspartate 360 and histidine 392. Histidine 392 contacts Zn(2+). Asparagine 398 carries an N-linked (GlcNAc...) asparagine glycan.

Belongs to the AB hydrolase superfamily. Lipase family. In terms of processing, N-glycosylated. N-glycosylation is important for maturation of the enzyme and normal subcellular location. Detected in alveolar macrophages (at protein level). Widely expressed. Expressed at highest levels in alveolar macrophages.

It localises to the lysosome. The protein localises to the secreted. It is found in the membrane. The enzyme catalyses a 1,2-diacyl-sn-glycero-3-phosphocholine + H2O = a 2-acyl-sn-glycero-3-phosphocholine + a fatty acid + H(+). It carries out the reaction 1,2-dihexadecanoyl-sn-glycero-3-phosphocholine + H2O = 2-hexadecanoyl-sn-glycero-3-phosphocholine + hexadecanoate + H(+). It catalyses the reaction 1-hexadecanoyl-2-(9Z-octadecenoyl)-sn-glycero-3-phosphocholine + H2O = 2-(9Z-octadecenoyl)-sn-glycero-3-phosphocholine + hexadecanoate + H(+). The catalysed reaction is 1,2-di-(9Z-octadecenoyl)-sn-glycero-3-phosphocholine + H2O = 2-(9Z-octadecenoyl)-sn-glycero-3-phosphocholine + (9Z)-octadecenoate + H(+). The enzyme catalyses 1-hexadecanoyl-2-glutaroyl-sn-glycero-3-phosphocholine + H2O = 2-glutaroyl-sn-glycero-3-phosphocholine + hexadecanoate + H(+). It carries out the reaction 1-hexadecanoyl-2-nonadioyl-sn-glycero-3-phosphocholine + H2O = 2-nonadioyl-sn-glycero-3-phosphocholine + hexadecanoate + H(+). It catalyses the reaction 1-hexadecanoyl-2-(5-oxopentanoyl)-sn-glycero-3-phosphocholine + H2O = 2-(5-oxopentanoyl)-sn-glycero-3-phosphocholine + hexadecanoate + H(+). The catalysed reaction is 1-hexadecanoyl-2-(9-oxononanoyl)-sn-glycero-3-phosphocholine + H2O = 2-(9-oxononanoyl)-sn-glycero-3-phosphocholine + hexadecanoate + H(+). The enzyme catalyses a 1,2-diacyl-sn-glycero-3-phosphocholine + H2O = a 1-acyl-sn-glycero-3-phosphocholine + a fatty acid + H(+). It carries out the reaction 1,2-dihexadecanoyl-sn-glycero-3-phosphocholine + H2O = 1-hexadecanoyl-sn-glycero-3-phosphocholine + hexadecanoate + H(+). It catalyses the reaction 1-hexadecanoyl-2-(9Z-octadecenoyl)-sn-glycero-3-phosphocholine + H2O = 1-hexadecanoyl-sn-glycero-3-phosphocholine + (9Z)-octadecenoate + H(+). The catalysed reaction is 1,2-di-(9Z-octadecenoyl)-sn-glycero-3-phosphocholine + H2O = 1-(9Z-octadecenoyl)-sn-glycero-3-phosphocholine + (9Z)-octadecenoate + H(+). The enzyme catalyses a 1-acyl-sn-glycero-3-phosphocholine + H2O = sn-glycerol 3-phosphocholine + a fatty acid + H(+). It carries out the reaction 1-hexadecanoyl-sn-glycero-3-phosphocholine + H2O = sn-glycerol 3-phosphocholine + hexadecanoate + H(+). It catalyses the reaction N-(acetyl)-sphing-4-enine + a 1,2-diacyl-sn-glycero-3-phosphoethanolamine = 1-O-acyl-N-(acetyl)-sphing-4-enine + a 2-acyl-sn-glycero-3-phosphoethanolamine. The catalysed reaction is 1-hexadecanoyl-2-(9Z-octadecenoyl)-sn-glycero-3-phosphoethanolamine + N-(acetyl)-sphing-4-enine = 2-(9Z-octadecenoyl)-sn-glycero-3-phosphoethanolamine + 1-hexadecanoyl-N-(acetyl)-sphing-4-enine. The enzyme catalyses 1-hexadecanoyl-2-(9Z,12Z-octadecadienoyl)-sn-glycero-3-phosphoethanolamine + N-(acetyl)-sphing-4-enine = 2-(9Z,12Z)-octadecadienoyl-sn-glycero-3-phosphoethanolamine + 1-hexadecanoyl-N-(acetyl)-sphing-4-enine. It carries out the reaction 1-hexadecanoyl-2-(5Z,8Z,11Z,14Z-eicosatetraenoyl)-sn-glycero-3-phosphoethanolamine + N-(acetyl)-sphing-4-enine = 2-(5Z,8Z,11Z,14Z)-eicosatetraenoyl-sn-glycero-3-phosphoethanolamine + 1-hexadecanoyl-N-(acetyl)-sphing-4-enine. It catalyses the reaction N-(acetyl)-sphing-4-enine + a 1,2-diacyl-sn-glycero-3-phosphoethanolamine = 1-O-acyl-N-(acetyl)-sphing-4-enine + a 1-acyl-sn-glycero-3-phosphoethanolamine. The catalysed reaction is 1-hexadecanoyl-2-(9Z-octadecenoyl)-sn-glycero-3-phosphoethanolamine + N-(acetyl)-sphing-4-enine = 1-(9Z-octadecenoyl)-N-(acetyl)-sphing-4-enine + 1-hexadecanoyl-sn-glycero-3-phosphoethanolamine. The enzyme catalyses 1-hexadecanoyl-2-(9Z,12Z-octadecadienoyl)-sn-glycero-3-phosphoethanolamine + N-(acetyl)-sphing-4-enine = 1-(9Z,12Z-octadecadienoyl)-N-acetylsphing-4-enine + 1-hexadecanoyl-sn-glycero-3-phosphoethanolamine. It carries out the reaction 1-hexadecanoyl-2-(5Z,8Z,11Z,14Z-eicosatetraenoyl)-sn-glycero-3-phosphoethanolamine + N-(acetyl)-sphing-4-enine = 1-(5Z,8Z,11Z,14Z)-eicosatetraenoyl-N-(acetyl)-sphing-4-enine + 1-hexadecanoyl-sn-glycero-3-phosphoethanolamine. It catalyses the reaction N-(acetyl)-sphing-4-enine + a 1,2-diacyl-sn-glycero-3-phosphocholine = 1-O-acyl-N-(acetyl)-sphing-4-enine + a 2-acyl-sn-glycero-3-phosphocholine. The catalysed reaction is 1-hexadecanoyl-2-(9Z-octadecenoyl)-sn-glycero-3-phosphocholine + N-(acetyl)-sphing-4-enine = 1-hexadecanoyl-N-(acetyl)-sphing-4-enine + 2-(9Z-octadecenoyl)-sn-glycero-3-phosphocholine. The enzyme catalyses 1-hexadecanoyl-2-(9Z,12Z-octadecadienoyl)-sn-glycero-3-phosphocholine + N-(acetyl)-sphing-4-enine = 2-(9Z,12Z-octadecadienoyl)-sn-glycero-3-phosphocholine + 1-hexadecanoyl-N-(acetyl)-sphing-4-enine. It carries out the reaction 1-hexadecanoyl-2-(5Z,8Z,11Z,14Z-eicosatetraenoyl)-sn-glycero-3-phosphocholine + N-(acetyl)-sphing-4-enine = 1-hexadecanoyl-N-(acetyl)-sphing-4-enine + 2-(5Z,8Z,11Z,14Z)-eicosatetraenoyl-sn-glycero-3-phosphocholine. It catalyses the reaction 1-hexadecanoyl-2-(4Z,7Z,10Z,13Z,16Z,19Z-docosahexaenoyl)-sn-glycero-3-phosphocholine + N-(acetyl)-sphing-4-enine = 2-(4Z,7Z,10Z,13Z,16Z,19Z-docosahexaenoyl)-sn-glycero-3-phosphocholine + 1-hexadecanoyl-N-(acetyl)-sphing-4-enine. The catalysed reaction is 1-hexadecanoyl-2-nonadioyl-sn-glycero-3-phosphocholine + N-(acetyl)-sphing-4-enine = 2-nonadioyl-sn-glycero-3-phosphocholine + 1-hexadecanoyl-N-(acetyl)-sphing-4-enine. The enzyme catalyses 1-octadecanoyl-2-(9Z-octadecenoyl)-sn-glycero-3-phosphocholine + N-(acetyl)-sphing-4-enine = 1-octadecanoyl-N-(acetyl)-sphing-4-enine + 2-(9Z-octadecenoyl)-sn-glycero-3-phosphocholine. It carries out the reaction 1-(9Z)-octadecenoyl-2-octadecanoyl-sn-glycero-3-phosphocholine + N-(acetyl)-sphing-4-enine = 2-octadecanoyl-sn-glycero-3-phosphocholine + 1-(9Z-octadecenoyl)-N-(acetyl)-sphing-4-enine. It catalyses the reaction 1-octadecanoyl-2-(5Z,8Z,11Z,14Z-eicosatetraenoyl)-sn-glycero-3-phosphocholine + N-(acetyl)-sphing-4-enine = 1-octadecanoyl-N-(acetyl)-sphing-4-enine + 2-(5Z,8Z,11Z,14Z)-eicosatetraenoyl-sn-glycero-3-phosphocholine. The catalysed reaction is 1-(9Z-octadecenoyl)-2-hexadecanoyl-sn-glycero-3-phosphocholine + N-(acetyl)-sphing-4-enine = 1-(9Z-octadecenoyl)-N-(acetyl)-sphing-4-enine + 2-hexadecanoyl-sn-glycero-3-phosphocholine. The enzyme catalyses N-(acetyl)-sphing-4-enine + a 1,2-diacyl-sn-glycero-3-phosphocholine = 1-O-acyl-N-(acetyl)-sphing-4-enine + a 1-acyl-sn-glycero-3-phosphocholine. It carries out the reaction 1-hexadecanoyl-2-(9Z-octadecenoyl)-sn-glycero-3-phosphocholine + N-(acetyl)-sphing-4-enine = 1-(9Z-octadecenoyl)-N-(acetyl)-sphing-4-enine + 1-hexadecanoyl-sn-glycero-3-phosphocholine. It catalyses the reaction 1-hexadecanoyl-2-(9Z,12Z-octadecadienoyl)-sn-glycero-3-phosphocholine + N-(acetyl)-sphing-4-enine = 1-(9Z,12Z-octadecadienoyl)-N-acetylsphing-4-enine + 1-hexadecanoyl-sn-glycero-3-phosphocholine. The catalysed reaction is 1-hexadecanoyl-2-(5Z,8Z,11Z,14Z-eicosatetraenoyl)-sn-glycero-3-phosphocholine + N-(acetyl)-sphing-4-enine = 1-(5Z,8Z,11Z,14Z)-eicosatetraenoyl-N-(acetyl)-sphing-4-enine + 1-hexadecanoyl-sn-glycero-3-phosphocholine. The enzyme catalyses 1-hexadecanoyl-2-(4Z,7Z,10Z,13Z,16Z,19Z-docosahexaenoyl)-sn-glycero-3-phosphocholine + N-(acetyl)-sphing-4-enine = 1-(4Z,7Z,10Z,13Z,16Z,19Z-docosahexaenoyl)-N-(acetyl)-sphing-4-enine + 1-hexadecanoyl-sn-glycero-3-phosphocholine. It carries out the reaction 1-octadecanoyl-2-(9Z-octadecenoyl)-sn-glycero-3-phosphocholine + N-(acetyl)-sphing-4-enine = 1-(9Z-octadecenoyl)-N-(acetyl)-sphing-4-enine + 1-octadecanoyl-sn-glycero-3-phosphocholine. It catalyses the reaction 1-octadecanoyl-2-(9Z,12Z)-octadecadienoyl-sn-glycero-3-phosphocholine + N-(acetyl)-sphing-4-enine = 1-(9Z,12Z-octadecadienoyl)-N-acetylsphing-4-enine + 1-octadecanoyl-sn-glycero-3-phosphocholine. The catalysed reaction is 1-(9Z-octadecenoyl)-2-hexadecanoyl-sn-glycero-3-phosphocholine + N-(acetyl)-sphing-4-enine = 1-hexadecanoyl-N-(acetyl)-sphing-4-enine + 1-(9Z-octadecenoyl)-sn-glycero-3-phosphocholine. The enzyme catalyses 1-(9Z)-octadecenoyl-2-octadecanoyl-sn-glycero-3-phosphocholine + N-(acetyl)-sphing-4-enine = 1-octadecanoyl-N-(acetyl)-sphing-4-enine + 1-(9Z-octadecenoyl)-sn-glycero-3-phosphocholine. It carries out the reaction 1,2-di-(9Z-octadecenoyl)-sn-glycero-3-phosphocholine + N-(acetyl)-sphing-4-enine = 1-(9Z-octadecenoyl)-N-(acetyl)-sphing-4-enine + 1-(9Z-octadecenoyl)-sn-glycero-3-phosphocholine. It catalyses the reaction 1-octadecanoyl-2-(5Z,8Z,11Z,14Z-eicosatetraenoyl)-sn-glycero-3-phosphocholine + N-(acetyl)-sphing-4-enine = 1-(5Z,8Z,11Z,14Z)-eicosatetraenoyl-N-(acetyl)-sphing-4-enine + 1-octadecanoyl-sn-glycero-3-phosphocholine. The catalysed reaction is a 1,2-diacyl-sn-glycero-3-phospho-L-serine + N-(acetyl)-sphing-4-enine = a 2-acyl-sn-glycero-3-phospho-L-serine + 1-O-acyl-N-(acetyl)-sphing-4-enine. The enzyme catalyses 1-octadecanoyl-2-(9Z-octadecenoyl)-sn-glycero-3-phospho-L-serine + N-(acetyl)-sphing-4-enine = 2-(9Z-octadecenoyl)-sn-glycero-3-phospho-L-serine + 1-octadecanoyl-N-(acetyl)-sphing-4-enine. It carries out the reaction a 1,2-diacyl-sn-glycero-3-phospho-L-serine + N-(acetyl)-sphing-4-enine = 1-O-acyl-N-(acetyl)-sphing-4-enine + a 1-acyl-sn-glycero-3-phospho-L-serine. It catalyses the reaction 1-octadecanoyl-2-(9Z-octadecenoyl)-sn-glycero-3-phospho-L-serine + N-(acetyl)-sphing-4-enine = 1-octadecanoyl-sn-glycero-3-phosphoserine + 1-(9Z-octadecenoyl)-N-(acetyl)-sphing-4-enine. The catalysed reaction is a 1,2-diacyl-sn-glycero-3-phospho-(1'-sn-glycerol) + N-(acetyl)-sphing-4-enine = 2-acyl-sn-glycero-3-phospho-(1'-sn-glycerol) + 1-O-acyl-N-(acetyl)-sphing-4-enine. The enzyme catalyses 1-octadecanoyl-2-(9Z-octadecenoyl)-sn-glycero-3-phospho-(1'-sn-glycerol) + N-(acetyl)-sphing-4-enine = 2-(9Z-octadecenoyl)-sn-glycero-3-phospho-(1'-sn-glycerol) + 1-octadecanoyl-N-(acetyl)-sphing-4-enine. It carries out the reaction a 1,2-diacyl-sn-glycero-3-phospho-(1'-sn-glycerol) + N-(acetyl)-sphing-4-enine = 1-O-acyl-N-(acetyl)-sphing-4-enine + 1-acyl-sn-glycero-3-phospho-(1'-sn-glycerol). It catalyses the reaction 1-octadecanoyl-2-(9Z-octadecenoyl)-sn-glycero-3-phospho-(1'-sn-glycerol) + N-(acetyl)-sphing-4-enine = 1-octadecanoyl-sn-glycero-3-phospho-(1'-sn-glycerol) + 1-(9Z-octadecenoyl)-N-(acetyl)-sphing-4-enine. The catalysed reaction is an N-acylethanolamine + a 1,2-diacyl-sn-glycero-3-phosphocholine = 2-(acylamino)ethyl fatty acid + a 2-acyl-sn-glycero-3-phosphocholine. The enzyme catalyses an N-acylethanolamine + a 1,2-diacyl-sn-glycero-3-phosphocholine = 2-(acylamino)ethyl fatty acid + a 1-acyl-sn-glycero-3-phosphocholine. It carries out the reaction N-(5Z,8Z,11Z,14Z-eicosatetraenoyl)-ethanolamine + 1,2-di-(9Z-octadecenoyl)-sn-glycero-3-phosphocholine = 2-[(5Z,8Z,11Z,14Z)-eicosatetraenoylamino]ethyl (9Z)-octadecenoate + (9Z-octadecenoyl)-sn-glycero-3-phosphocholine. It catalyses the reaction N-(9Z-octadecenoyl) ethanolamine + 1,2-di-(9Z-octadecenoyl)-sn-glycero-3-phosphocholine = 2-[(9Z)-octadecenoylamino]ethyl (9Z)-octadecenoate + (9Z-octadecenoyl)-sn-glycero-3-phosphocholine. The catalysed reaction is a 3-acyl-sn-glycerol + a 1,2-diacyl-sn-glycero-3-phosphocholine = a 1,3-diacylglycerol + a 1-acyl-sn-glycero-3-phosphocholine. The enzyme catalyses a 3-acyl-sn-glycerol + a 1,2-diacyl-sn-glycero-3-phosphocholine = a 1,3-diacylglycerol + a 2-acyl-sn-glycero-3-phosphocholine. It carries out the reaction 3-(9Z-octadecenoyl)-sn-glycerol + 1,2-di-(9Z-octadecenoyl)-sn-glycero-3-phosphocholine = 1,3-di-(9Z-octadecenoyl)-glycerol + (9Z-octadecenoyl)-sn-glycero-3-phosphocholine. It catalyses the reaction 3-hexadecanoyl-sn-glycerol + 1,2-di-(9Z-octadecenoyl)-sn-glycero-3-phosphocholine = 1-(9Z)-octadecenoyl-3-hexadecanoyl-sn-glycerol + (9Z-octadecenoyl)-sn-glycero-3-phosphocholine. The catalysed reaction is a 1-acyl-sn-glycerol + a 1,2-diacyl-sn-glycero-3-phosphocholine = a 1,3-diacylglycerol + a 2-acyl-sn-glycero-3-phosphocholine. The enzyme catalyses a 1-acyl-sn-glycerol + a 1,2-diacyl-sn-glycero-3-phosphocholine = a 1,3-diacylglycerol + a 1-acyl-sn-glycero-3-phosphocholine. It carries out the reaction 1-(9Z-octadecenoyl)-sn-glycerol + 1,2-di-(9Z-octadecenoyl)-sn-glycero-3-phosphocholine = 1,3-di-(9Z-octadecenoyl)-glycerol + (9Z-octadecenoyl)-sn-glycero-3-phosphocholine. It catalyses the reaction 1-hexadecanoyl-sn-glycerol + 1,2-di-(9Z-octadecenoyl)-sn-glycero-3-phosphocholine = 1-hexadecanoyl-3-(9Z)-octadecenoyl-sn-glycerol + (9Z-octadecenoyl)-sn-glycero-3-phosphocholine. The catalysed reaction is a 2-acylglycerol + a 1,2-diacyl-sn-glycero-3-phosphocholine = a 1,2-diacylglycerol + a 2-acyl-sn-glycero-3-phosphocholine. The enzyme catalyses a 2-acylglycerol + a 1,2-diacyl-sn-glycero-3-phosphocholine = a 1,2-diacylglycerol + a 1-acyl-sn-glycero-3-phosphocholine. It carries out the reaction 2-hexadecanoylglycerol + 1,2-di-(9Z-octadecenoyl)-sn-glycero-3-phosphocholine = 1-(9Z)-octadecenoyl-2-hexadecanoylglycerol + (9Z-octadecenoyl)-sn-glycero-3-phosphocholine. It catalyses the reaction 1-O-alkylglycerol + a 1,2-diacyl-sn-glycero-3-phosphocholine = 1-O-alkyl-3-acylglycerol + a 1-acyl-sn-glycero-3-phosphocholine. The catalysed reaction is 1-O-alkylglycerol + a 1,2-diacyl-sn-glycero-3-phosphocholine = 1-O-alkyl-3-acylglycerol + a 2-acyl-sn-glycero-3-phosphocholine. The enzyme catalyses 1-O-hexadecylglycerol + 1,2-di-(9Z-octadecenoyl)-sn-glycero-3-phosphocholine = 1-O-hexadecyl-3-(9Z)-octadecenoylglycerol + (9Z-octadecenoyl)-sn-glycero-3-phosphocholine. It carries out the reaction 1-O-alkyl-2-acyl-sn-glycerol + a 1,2-diacyl-sn-glycero-3-phosphocholine = 1-O-alkyl-2,3-diacyl-sn-glycerol + a 2-acyl-sn-glycero-3-phosphocholine. It catalyses the reaction 1-O-alkyl-2-acyl-sn-glycerol + a 1,2-diacyl-sn-glycero-3-phosphocholine = 1-O-alkyl-2,3-diacyl-sn-glycerol + a 1-acyl-sn-glycero-3-phosphocholine. The catalysed reaction is 1-O-hexadecyl-2-acetyl-sn-glycerol + 1,2-di-(9Z-octadecenoyl)-sn-glycero-3-phosphocholine = 1-O-hexadecyl-2-acetyl-3-(9Z)-octadecenoyl-sn-glycerol + (9Z-octadecenoyl)-sn-glycero-3-phosphocholine. The enzyme catalyses 1-O-hexadecyl-2-O-methyl-sn-glycerol + 1,2-di-(9Z-octadecenoyl)-sn-glycero-3-phosphocholine = 1-O-hexadecyl-2-O-methyl-3-(9Z)-octadecenoyl-sn-glycerol + (9Z-octadecenoyl)-sn-glycero-3-phosphocholine. It carries out the reaction a 1,2-diacyl-sn-glycero-3-phosphoethanolamine + H2O = a 1-acyl-sn-glycero-3-phosphoethanolamine + a fatty acid + H(+). It catalyses the reaction 1-acyl-2-(5Z,8Z,11Z,14Z)-eicosatetraenoyl-sn-glycero-3-phosphoethanolamine + H2O = a 1-acyl-sn-glycero-3-phosphoethanolamine + (5Z,8Z,11Z,14Z)-eicosatetraenoate + H(+). The catalysed reaction is a 1,2-diacyl-sn-glycero-3-phospho-(1'-sn-glycerol) + H2O = 1-acyl-sn-glycero-3-phospho-(1'-sn-glycerol) + a fatty acid + H(+). The enzyme catalyses 1-hexadecanoyl-2-(9Z-octadecenoyl)-sn-glycero-3-phospho-(1'-sn-glycerol) + H2O = 1-hexadecanoyl-sn-glycero-3-phospho-(1'-sn-glycerol) + (9Z)-octadecenoate + H(+). It carries out the reaction a 1,2-diacyl-sn-glycero-3-phospho-(1'-sn-glycerol) + H2O = 2-acyl-sn-glycero-3-phospho-(1'-sn-glycerol) + a fatty acid + H(+). It catalyses the reaction 1-hexadecanoyl-2-(9Z-octadecenoyl)-sn-glycero-3-phospho-(1'-sn-glycerol) + H2O = 2-(9Z-octadecenoyl)-sn-glycero-3-phospho-(1'-sn-glycerol) + hexadecanoate + H(+). Its activity is regulated as follows. Transacylase activity is inhibited by MJ33. Its function is as follows. Has dual calcium-independent phospholipase and O-acyltransferase activities with a potential role in glycerophospholipid homeostasis and remodeling of acyl groups of lipophilic alcohols present in acidic cellular compartments. Catalyzes hydrolysis of the ester bond of the fatty acyl group attached at sn-1 or sn-2 position of phospholipids (phospholipase A1 or A2 activity) and transfer it to the hydroxyl group at the first carbon of lipophilic alcohols (O-acyltransferase activity). Among preferred fatty acyl donors are phosphatidylcholines, phosphatidylethanolamines, phosphatidylglycerols and phosphatidylserines. Favors sn-2 over sn-1 deacylation of unsaturated fatty acyl groups of phosphatidylcholines, phosphatidylethanolamines, and phosphatidylglycerols. Among preferred fatty acyl acceptors are natural lipophilic alcohols including short-chain ceramide N-acetyl-sphingosine (C2 ceramide), alkylacylglycerols, monoacylglycerols, and acylethanolamides such as anandamide and oleoylethanolamide. Selectively hydrolyzes the sn-1 fatty acyl group of truncated oxidized phospholipids and may play a role in detoxification of reactive oxidized phospholipids during oxidative stress. Required for normal phospholipid degradation in alveolar macrophages with potential implications in the clearance of pulmonary surfactant, which is mainly composed of dipalmitoylphosphatidylcholine (1,2-dihexadecanoyl-sn-glycero-3-phosphocholine). Involved in the first step of bis(monoacylglycero)phosphate (BMP) de novo synthesis from phosphatidylglycerol (1,2-diacyl-sn-glycero-3-phospho-(1'-sn-glycerol), PG). BMP is an important player in cargo sorting and degradation, regulation of cellular cholesterol levels and intercellular communication. At neutral pH, hydrolyzes the sn-1 fatty acyl group of the lysophosphatidylcholines. The sequence is that of Lysosomal phospholipase A and acyltransferase (Pla2g15) from Rattus norvegicus (Rat).